The sequence spans 1024 residues: Carbamoyl phosphate synthase large chain (1024 aa).

A carboxyphosphate synthetic domain region spans residues 1 to 402; it reads MPKRTDLQTI…SLQKALRSTE (402 aa). ATP-binding residues include R129, R169, G175, G176, E208, I210, E215, G241, V242, H243, Q285, and E299. The ATP-grasp 1 domain maps to 133–328; it reads QAAMKKIGVE…IAKIAALLAV (196 aa). Residues Q285, E299, and N301 each contribute to the Mg(2+) site. Mn(2+)-binding residues include Q285, E299, and N301. An oligomerization domain region spans residues 403–546; the sequence is GDIRGVYAEM…YSTYEWEDEV (144 aa). The segment at 547–929 is carbamoyl phosphate synthetic domain; it reads APTDKPKVVI…AFYRAQLGAK (383 aa). One can recognise an ATP-grasp 2 domain in the interval 671–863; sequence NALCERLGLP…LAKSAARIAA (193 aa). ATP contacts are provided by R707, Q747, L749, E754, G779, V780, H781, S782, Q822, and E834. Mg(2+) is bound by residues Q822, E834, and N836. Q822, E834, and N836 together coordinate Mn(2+). One can recognise an MGS-like domain in the interval 930–1024; the sequence is NYLPLEGTAL…GVRSLQEWVK (95 aa). Residues 930 to 1024 are allosteric domain; that stretch reads NYLPLEGTAL…GVRSLQEWVK (95 aa).

Belongs to the CarB family. In terms of assembly, composed of two chains; the small (or glutamine) chain promotes the hydrolysis of glutamine to ammonia, which is used by the large (or ammonia) chain to synthesize carbamoyl phosphate. Tetramer of heterodimers (alpha,beta)4. Mg(2+) is required as a cofactor. Mn(2+) serves as cofactor.

It carries out the reaction hydrogencarbonate + L-glutamine + 2 ATP + H2O = carbamoyl phosphate + L-glutamate + 2 ADP + phosphate + 2 H(+). The enzyme catalyses hydrogencarbonate + NH4(+) + 2 ATP = carbamoyl phosphate + 2 ADP + phosphate + 2 H(+). It participates in amino-acid biosynthesis; L-arginine biosynthesis; carbamoyl phosphate from bicarbonate: step 1/1. The protein operates within pyrimidine metabolism; UMP biosynthesis via de novo pathway; (S)-dihydroorotate from bicarbonate: step 1/3. Its function is as follows. Large subunit of the glutamine-dependent carbamoyl phosphate synthetase (CPSase). CPSase catalyzes the formation of carbamoyl phosphate from the ammonia moiety of glutamine, carbonate, and phosphate donated by ATP, constituting the first step of 2 biosynthetic pathways, one leading to arginine and/or urea and the other to pyrimidine nucleotides. The large subunit (synthetase) binds the substrates ammonia (free or transferred from glutamine from the small subunit), hydrogencarbonate and ATP and carries out an ATP-coupled ligase reaction, activating hydrogencarbonate by forming carboxy phosphate which reacts with ammonia to form carbamoyl phosphate. This Deinococcus radiodurans (strain ATCC 13939 / DSM 20539 / JCM 16871 / CCUG 27074 / LMG 4051 / NBRC 15346 / NCIMB 9279 / VKM B-1422 / R1) protein is Carbamoyl phosphate synthase large chain.